The chain runs to 372 residues: Histidinol-phosphate aminotransferase (372 aa).

N6-(pyridoxal phosphate)lysine is present on Lys230.

Belongs to the class-II pyridoxal-phosphate-dependent aminotransferase family. Histidinol-phosphate aminotransferase subfamily. Homodimer. Pyridoxal 5'-phosphate is required as a cofactor.

The catalysed reaction is L-histidinol phosphate + 2-oxoglutarate = 3-(imidazol-4-yl)-2-oxopropyl phosphate + L-glutamate. It participates in amino-acid biosynthesis; L-histidine biosynthesis; L-histidine from 5-phospho-alpha-D-ribose 1-diphosphate: step 7/9. This chain is Histidinol-phosphate aminotransferase, found in Paenarthrobacter aurescens (strain TC1).